The sequence spans 431 residues: Trigger factor (431 aa).

Residues 158–243 (GHLVALETWS…VIEVSEPVLL (86 aa)) form the PPIase FKBP-type domain.

Belongs to the FKBP-type PPIase family. Tig subfamily.

The protein localises to the cytoplasm. The enzyme catalyses [protein]-peptidylproline (omega=180) = [protein]-peptidylproline (omega=0). Involved in protein export. Acts as a chaperone by maintaining the newly synthesized protein in an open conformation. Functions as a peptidyl-prolyl cis-trans isomerase. This chain is Trigger factor (tig), found in Xylella fastidiosa (strain 9a5c).